We begin with the raw amino-acid sequence, 75 residues long: Large ribosomal subunit protein bL31 (75 aa).

Belongs to the bacterial ribosomal protein bL31 family. Type A subfamily. Part of the 50S ribosomal subunit.

Its function is as follows. Binds the 23S rRNA. The polypeptide is Large ribosomal subunit protein bL31 (Chlorobium phaeovibrioides (strain DSM 265 / 1930) (Prosthecochloris vibrioformis (strain DSM 265))).